We begin with the raw amino-acid sequence, 215 residues long: N-(5'-phosphoribosyl)anthranilate isomerase (215 aa).

This sequence belongs to the TrpF family.

It carries out the reaction N-(5-phospho-beta-D-ribosyl)anthranilate = 1-(2-carboxyphenylamino)-1-deoxy-D-ribulose 5-phosphate. It participates in amino-acid biosynthesis; L-tryptophan biosynthesis; L-tryptophan from chorismate: step 3/5. In Paramagnetospirillum magneticum (strain ATCC 700264 / AMB-1) (Magnetospirillum magneticum), this protein is N-(5'-phosphoribosyl)anthranilate isomerase.